The primary structure comprises 512 residues: Cytochrome P450 monooxygenase paxQ (512 aa).

The next 2 membrane-spanning stretches (helical) occupy residues 3-23 and 35-55; these read FVLSALQRDSWGIAAIILVSI and LQIPVPYVGKCGILGPWISAL. Cys453 lines the heme pocket.

It belongs to the cytochrome P450 family. The cofactor is heme.

The protein resides in the membrane. It functions in the pathway secondary metabolite biosynthesis. Functionally, cytochrome P450 monooxygenase; part of the gene cluster that mediates the biosynthesis of paxilline, a mycotoxin that acts as an inhibitor of mammalian maxi-K channels. PaxG, the geranylgeranyl diphosphate (GGPP) synthase is proposed to catalyze the first step in paxilline biosynthesis. Condensation of indole-3-glycerol phosphate with GGPP by paxC then forms 3-geranylgeranylindole (3-GGI), followed by epoxidation and cyclization of this intermediate (by paxM and paxB) to form paspaline. Paspaline is subsequently converted to 13-desoxypaxilline by paxP, the latter being then converted to paxilline by paxQ. Finally paxilline can be mono- and di-prenylated by paxD. PaxQ can also utilized beta-paxitriol and alpha-PC-M6 as substrates converting them to alpha-paxitriol. The protein is Cytochrome P450 monooxygenase paxQ of Penicillium paxilli.